The following is a 163-amino-acid chain: Nucleotide-binding protein MS1759 (163 aa).

This sequence belongs to the YajQ family.

In terms of biological role, nucleotide-binding protein. This is Nucleotide-binding protein MS1759 from Mannheimia succiniciproducens (strain KCTC 0769BP / MBEL55E).